Consider the following 587-residue polypeptide: Pyruvate decarboxylase 3 (587 aa).

Substrate is bound by residues Asp-48 and His-135. Positions 415 to 496 (DSWFNCQKLR…FLINNGGYTI (82 aa)) are thiamine pyrophosphate binding. Residues Asp-464, Asn-491, and Gly-493 each coordinate Mg(2+). A substrate-binding site is contributed by Glu-497.

It belongs to the TPP enzyme family. Homotetramer. The cofactor is a metal cation. Thiamine diphosphate serves as cofactor.

The catalysed reaction is a 2-oxocarboxylate + H(+) = an aldehyde + CO2. In Oryza sativa subsp. japonica (Rice), this protein is Pyruvate decarboxylase 3 (PDC3).